The following is a 145-amino-acid chain: D-aminoacyl-tRNA deacylase (145 aa).

The Gly-cisPro motif, important for rejection of L-amino acids motif lies at 137–138; the sequence is GP.

This sequence belongs to the DTD family. Homodimer.

Its subcellular location is the cytoplasm. The enzyme catalyses glycyl-tRNA(Ala) + H2O = tRNA(Ala) + glycine + H(+). It catalyses the reaction a D-aminoacyl-tRNA + H2O = a tRNA + a D-alpha-amino acid + H(+). Functionally, an aminoacyl-tRNA editing enzyme that deacylates mischarged D-aminoacyl-tRNAs. Also deacylates mischarged glycyl-tRNA(Ala), protecting cells against glycine mischarging by AlaRS. Acts via tRNA-based rather than protein-based catalysis; rejects L-amino acids rather than detecting D-amino acids in the active site. By recycling D-aminoacyl-tRNA to D-amino acids and free tRNA molecules, this enzyme counteracts the toxicity associated with the formation of D-aminoacyl-tRNA entities in vivo and helps enforce protein L-homochirality. In Lactobacillus delbrueckii subsp. bulgaricus (strain ATCC 11842 / DSM 20081 / BCRC 10696 / JCM 1002 / NBRC 13953 / NCIMB 11778 / NCTC 12712 / WDCM 00102 / Lb 14), this protein is D-aminoacyl-tRNA deacylase.